Consider the following 97-residue polypeptide: Coiled-coil domain-containing protein 167 (97 aa).

Residues 2 to 78 adopt a coiled-coil conformation; sequence TKKKRENLGV…LLRHENRKNT (77 aa). A helical membrane pass occupies residues 78-95; that stretch reads TLLSVAIFTVFALLYAYW.

The protein localises to the membrane. The chain is Coiled-coil domain-containing protein 167 (Ccdc167) from Mus musculus (Mouse).